A 63-amino-acid chain; its full sequence is ComG operon repressor (63 aa).

Negatively regulates the transcription of the comG operon. This is ComG operon repressor (comZ) from Bacillus subtilis (strain 168).